A 557-amino-acid chain; its full sequence is Urocanate hydratase (557 aa).

Residues 52–53 (GG), Gln130, 176–178 (GMG), Glu196, 242–243 (NA), 263–267 (QTSAH), 273–274 (YL), and Tyr322 contribute to the NAD(+) site. Cys410 is an active-site residue. Gly492 provides a ligand contact to NAD(+).

It belongs to the urocanase family. NAD(+) is required as a cofactor.

The protein resides in the cytoplasm. The catalysed reaction is 4-imidazolone-5-propanoate = trans-urocanate + H2O. Its pathway is amino-acid degradation; L-histidine degradation into L-glutamate; N-formimidoyl-L-glutamate from L-histidine: step 2/3. Functionally, catalyzes the conversion of urocanate to 4-imidazolone-5-propionate. In Rhizobium meliloti (strain 1021) (Ensifer meliloti), this protein is Urocanate hydratase.